Reading from the N-terminus, the 840-residue chain is UPF0508 protein SCY_2952 (840 aa).

The protein belongs to the UPF0508 family.

The polypeptide is UPF0508 protein SCY_2952 (Saccharomyces cerevisiae (strain YJM789) (Baker's yeast)).